Consider the following 120-residue polypeptide: UPF0344 protein LMHCC_0278 (120 aa).

Helical transmembrane passes span 3 to 23, 33 to 53, 62 to 82, and 92 to 112; these read GYIH…ALLI, MLQM…IMMV, ILAI…EMLL, and GMFL…GFYL.

Belongs to the UPF0344 family.

It is found in the cell membrane. This Listeria monocytogenes serotype 4a (strain HCC23) protein is UPF0344 protein LMHCC_0278.